The primary structure comprises 306 residues: tRNA pseudouridine synthase B (306 aa).

Catalysis depends on D38, which acts as the Nucleophile.

Belongs to the pseudouridine synthase TruB family. Type 1 subfamily.

The enzyme catalyses uridine(55) in tRNA = pseudouridine(55) in tRNA. Responsible for synthesis of pseudouridine from uracil-55 in the psi GC loop of transfer RNAs. This chain is tRNA pseudouridine synthase B, found in Syntrophotalea carbinolica (strain DSM 2380 / NBRC 103641 / GraBd1) (Pelobacter carbinolicus).